A 372-amino-acid polypeptide reads, in one-letter code: Lipoyl synthase, mitochondrial (372 aa).

Positions 106, 111, 117, 137, 141, 144, and 352 each coordinate [4Fe-4S] cluster. The 220-residue stretch at 122–341 (EYGTATATIM…EKAGNELGFL (220 aa)) folds into the Radical SAM core domain.

The protein belongs to the radical SAM superfamily. Lipoyl synthase family. [4Fe-4S] cluster is required as a cofactor.

It is found in the mitochondrion. It carries out the reaction [[Fe-S] cluster scaffold protein carrying a second [4Fe-4S](2+) cluster] + N(6)-octanoyl-L-lysyl-[protein] + 2 oxidized [2Fe-2S]-[ferredoxin] + 2 S-adenosyl-L-methionine + 4 H(+) = [[Fe-S] cluster scaffold protein] + N(6)-[(R)-dihydrolipoyl]-L-lysyl-[protein] + 4 Fe(3+) + 2 hydrogen sulfide + 2 5'-deoxyadenosine + 2 L-methionine + 2 reduced [2Fe-2S]-[ferredoxin]. It functions in the pathway protein modification; protein lipoylation via endogenous pathway; protein N(6)-(lipoyl)lysine from octanoyl-[acyl-carrier-protein]: step 2/2. Its function is as follows. Catalyzes the radical-mediated insertion of two sulfur atoms into the C-6 and C-8 positions of the octanoyl moiety bound to the lipoyl domains of lipoate-dependent enzymes, thereby converting the octanoylated domains into lipoylated derivatives. This Xenopus laevis (African clawed frog) protein is Lipoyl synthase, mitochondrial (lias).